A 123-amino-acid chain; its full sequence is Ribonuclease P protein component (123 aa).

Belongs to the RnpA family. Consists of a catalytic RNA component (M1 or rnpB) and a protein subunit.

It catalyses the reaction Endonucleolytic cleavage of RNA, removing 5'-extranucleotides from tRNA precursor.. In terms of biological role, RNaseP catalyzes the removal of the 5'-leader sequence from pre-tRNA to produce the mature 5'-terminus. It can also cleave other RNA substrates such as 4.5S RNA. The protein component plays an auxiliary but essential role in vivo by binding to the 5'-leader sequence and broadening the substrate specificity of the ribozyme. In Streptococcus pneumoniae (strain Hungary19A-6), this protein is Ribonuclease P protein component.